A 52-amino-acid chain; its full sequence is Large ribosomal subunit protein eL40 (52 aa).

4 residues coordinate Zn(2+): Cys-20, Cys-23, Cys-34, and Cys-39.

This sequence belongs to the eukaryotic ribosomal protein eL40 family. Component of the large ribosomal subunit. Mature ribosomes consist of a small (40S) and a large (60S) subunit. The 40S subunit contains about 32 different proteins and 1 molecule of RNA (18S). The 60S subunit contains 45 different proteins and 3 molecules of RNA (25S, 5.8S and 5S). The cofactor is Zn(2+).

The protein resides in the cytoplasm. In terms of biological role, component of the ribosome, a large ribonucleoprotein complex responsible for the synthesis of proteins in the cell. The small ribosomal subunit (SSU) binds messenger RNAs (mRNAs) and translates the encoded message by selecting cognate aminoacyl-transfer RNA (tRNA) molecules. The large subunit (LSU) contains the ribosomal catalytic site termed the peptidyl transferase center (PTC), which catalyzes the formation of peptide bonds, thereby polymerizing the amino acids delivered by tRNAs into a polypeptide chain. The nascent polypeptides leave the ribosome through a tunnel in the LSU and interact with protein factors that function in enzymatic processing, targeting, and the membrane insertion of nascent chains at the exit of the ribosomal tunnel. The protein is Large ribosomal subunit protein eL40 of Candida albicans (strain SC5314 / ATCC MYA-2876) (Yeast).